The primary structure comprises 610 residues: Zinc metalloproteinase-disintegrin-like VAP1 (610 aa).

Positions 1 to 20 are cleaved as a signal peptide; the sequence is MIQVLLVTISLAVFPYQGSS. The propeptide occupies 21-189; it reads VILESGNVND…KKASQSNLTP (169 aa). At Glu190 the chain carries Pyrrolidone carboxylic acid (Glu). One can recognise a Peptidase M12B domain in the interval 199–395; it reads KYVKLFLVAD…NMPQCILKKP (197 aa). Asn218 carries N-linked (GlcNAc...) asparagine glycosylation. Cystine bridges form between Cys310–Cys390, Cys350–Cys374, and Cys352–Cys357. His335 is a Zn(2+) binding site. Positions 335 to 346 match the Metal-binding motif; it reads HEMGHNLGMDHD. The active-site Proton acceptor is the Glu336. Zn(2+) is bound by residues His339 and His345. One can recognise a Disintegrin domain in the interval 403–488; that stretch reads PAVCGNYFVE…AECTDRFQRN (86 aa). Residues Val405, Asn408, Phe410, Glu412, Glu415, and Asp418 each coordinate Ca(2+). Disulfide bonds link Cys406–Cys435, Cys417–Cys430, Cys419–Cys425, Cys429–Cys452, Cys443–Cys449, Cys448–Cys474, Cys461–Cys481, Cys468–Cys499, Cys492–Cys504, Cys511–Cys561, Cys526–Cys572, Cys539–Cys549, Cys556–Cys598, and Cys592–Cys603. Residues 467 to 469 carry the D/ECD-tripeptide motif; it reads ECD. Positions 469, 470, 472, 483, and 484 each coordinate Ca(2+).

It belongs to the venom metalloproteinase (M12B) family. P-III subfamily. P-IIIc sub-subfamily. In terms of assembly, homodimer; disulfide-linked. It depends on Zn(2+) as a cofactor. In terms of processing, the N-terminus is blocked. Expressed by the venom gland.

The protein localises to the secreted. With respect to regulation, inhibited by EDTA and EGTA, but not by PMSF. Functionally, zinc metalloprotease that has fibrinogenolytic and hemorrhagic activities. It induces apoptosis in vascular endothelial cells (VEC), without degrading extracellular matrix (it cannot cleave collagen) or inhibiting adhesion of VEC. VAP1-induced apoptosis is inhibited by antibodies for integrin alpha-3, alpha-6, beta-1 and CD9. Apoptosis is accompanied by severe cell fragmentation, which is controlled by caspases. The polypeptide is Zinc metalloproteinase-disintegrin-like VAP1 (Crotalus atrox (Western diamondback rattlesnake)).